The following is a 229-amino-acid chain: Ribonuclease HII (229 aa).

The RNase H type-2 domain occupies W34–T223. The a divalent metal cation site is built by D40, E41, and D131. The tract at residues M209 to E229 is disordered.

This sequence belongs to the RNase HII family. It depends on Mn(2+) as a cofactor. Mg(2+) is required as a cofactor.

Its subcellular location is the cytoplasm. It carries out the reaction Endonucleolytic cleavage to 5'-phosphomonoester.. Functionally, endonuclease that specifically degrades the RNA of RNA-DNA hybrids. The polypeptide is Ribonuclease HII (Rhizobium johnstonii (strain DSM 114642 / LMG 32736 / 3841) (Rhizobium leguminosarum bv. viciae)).